Reading from the N-terminus, the 419-residue chain is Elongation factor Tu, chloroplastic (419 aa).

One can recognise a tr-type G domain in the interval Lys10–Asp214. The G1 stretch occupies residues Gly19–Thr26. Gly19–Thr26 provides a ligand contact to GTP. Residue Thr26 participates in Mg(2+) binding. Positions Gly60 to Asn64 are G2. Residues Asp81–Gly84 form a G3 region. GTP is bound by residues Asp81–His85 and Asn136–Asp139. The tract at residues Asn136–Asp139 is G4. The interval Ser174 to Leu176 is G5.

Belongs to the TRAFAC class translation factor GTPase superfamily. Classic translation factor GTPase family. EF-Tu/EF-1A subfamily.

The protein localises to the plastid. Its subcellular location is the chloroplast. It carries out the reaction GTP + H2O = GDP + phosphate + H(+). Its function is as follows. GTP hydrolase that promotes the GTP-dependent binding of aminoacyl-tRNA to the A-site of ribosomes during protein biosynthesis. The chain is Elongation factor Tu, chloroplastic (tufA) from Tetradesmus obliquus (Green alga).